A 310-amino-acid chain; its full sequence is Receptor homology region, transmembrane domain- and RING domain-containing protein 1 (310 aa).

Positions 1–25 are cleaved as a signal peptide; the sequence is MRLVVSSCLLVAAPFLSSLLRVSLA. The Lumenal portion of the chain corresponds to 26–168; it reads TVVLNSISAS…NPPDRGSAWT (143 aa). The cysteines at positions 65 and 92 are disulfide-linked. A glycan (N-linked (GlcNAc...) asparagine) is linked at Asn-75. One can recognise a PA domain in the interval 81-149; that stretch reads TTKFALIIRG…VAGEILRKYA (69 aa). A helical transmembrane segment spans residues 169–189; it reads VLAISFFSLLLIVTFLLIAFF. Residues 190–310 are Cytoplasmic-facing; sequence APRHWTQWRG…FAFAQSSQSR (121 aa). The RING-type; atypical zinc finger occupies 232 to 274; sequence CAICLEDYRFGESLRLLPCQHAFHLNCIDSWLTKWGTSCPVCK. Over residues 284–293 the composition is skewed to basic and acidic residues; sequence SEVHKRESPR. The interval 284-310 is disordered; the sequence is SEVHKRESPRTDTSTSRFAFAQSSQSR. Over residues 294–310 the composition is skewed to polar residues; it reads TDTSTSRFAFAQSSQSR.

In terms of tissue distribution, expressed in leaves, stems, flowers and siliques.

It is found in the prevacuolar compartment membrane. The protein resides in the protein storage vacuole membrane. It localises to the golgi apparatus membrane. Its function is as follows. Involved in the trafficking of vacuolar proteins. Functions probably as a sorting receptor for protein trafficking to the protein storage vacuole (PSV) by binding the C-terminal vacuolar sorting determinant (VSD) of vacuolar-sorted proteins. The chain is Receptor homology region, transmembrane domain- and RING domain-containing protein 1 (RMR1) from Arabidopsis thaliana (Mouse-ear cress).